The primary structure comprises 171 residues: Large ribosomal subunit protein uL10 (171 aa).

This sequence belongs to the universal ribosomal protein uL10 family. As to quaternary structure, part of the ribosomal stalk of the 50S ribosomal subunit. The N-terminus interacts with L11 and the large rRNA to form the base of the stalk. The C-terminus forms an elongated spine to which L12 dimers bind in a sequential fashion forming a multimeric L10(L12)X complex.

Functionally, forms part of the ribosomal stalk, playing a central role in the interaction of the ribosome with GTP-bound translation factors. This is Large ribosomal subunit protein uL10 (rplJ) from Lactococcus lactis subsp. lactis (strain IL1403) (Streptococcus lactis).